The chain runs to 89 residues: Small ribosomal subunit protein bS16 (89 aa).

Belongs to the bacterial ribosomal protein bS16 family.

The chain is Small ribosomal subunit protein bS16 from Nitrosomonas europaea (strain ATCC 19718 / CIP 103999 / KCTC 2705 / NBRC 14298).